Reading from the N-terminus, the 180-residue chain is Endothelin-2 (180 aa).

The N-terminal stretch at 1-26 (MVALPTAWCSVALALLVALHEGKSQS) is a signal peptide. The propeptide occupies 27 to 47 (AATSEEPPAPSARARGSHLRL). Cystine bridges form between cysteine 50-cysteine 64 and cysteine 52-cysteine 60. The propeptide occupies 71-180 (VNTPGQTAPY…ESSHSRWRKR (110 aa)). The endothelin-like stretch occupies residues 97-112 (CECYSTRDSACVTFCH). The disordered stretch occupies residues 157–180 (NFTRHQQQKATREPESSHSRWRKR).

Belongs to the endothelin/sarafotoxin family.

The protein resides in the secreted. In terms of biological role, endothelins are endothelium-derived vasoconstrictor peptides. This Atelerix albiventris (Middle-African hedgehog) protein is Endothelin-2 (EDN2).